Consider the following 690-residue polypeptide: Proprotein convertase subtilisin/kexin type 9 (690 aa).

An N-terminal signal peptide occupies residues 1-28; the sequence is MGTVSSRRSWWPLPLLLLLLLGPAGARA. The propeptide occupies 29–150; that stretch reads QEDEDGDYEE…IEEDSSVFAQ (122 aa). Y36 is modified (sulfotyrosine). At S45 the chain carries Phosphoserine. An Inhibitor I9 domain is found at 75–147; it reads TYVVVLKEET…VDYIEEDSSV (73 aa). The Peptidase S8 domain occupies 153-459; sequence PWNLERITPP…GWQLFCRTVW (307 aa). Residues D184 and H224 each act as charge relay system in the active site. Cystine bridges form between C221/C253 and C321/C356. S384 serves as the catalytic Charge relay system. Residues 448–690 form a C-terminal domain region; sequence GAGWQLFCRT…HLAQASQELQ (243 aa). 3 disulfides stabilise this stretch: C455-C525, C475-C524, and C484-C507. N531 carries an N-linked (GlcNAc...) asparagine glycan. 6 disulfides stabilise this stretch: C532–C599, C550–C598, C560–C586, C606–C677, C624–C676, and C633–C652. S686 carries the post-translational modification Phosphoserine.

It belongs to the peptidase S8 family. In terms of assembly, monomer. Can self-associate to form dimers and higher multimers which may have increased LDLR degrading activity. The precursor protein but not the mature protein may form multimers. Interacts with APOB, VLDLR, LRP8/APOER2 and BACE1. The full-length immature form (pro-PCSK9) interacts with SCNN1A, SCNN1B and SCNN1G. The pro-PCSK9 form (via C-terminal domain) interacts with LDLR. Interacts (via the C-terminal domain) with ANXA2 (via repeat Annexin 1); the interaction inhibits the degradation of LDLR. The cofactor is Ca(2+). Post-translationally, cleavage by furin and PCSK5 generates a truncated inactive protein that is unable to induce LDLR degradation. In terms of processing, undergoes autocatalytic cleavage in the endoplasmic reticulum to release the propeptide from the N-terminus and the cleavage of the propeptide is strictly required for its maturation and activation. The cleaved propeptide however remains associated with the catalytic domain through non-covalent interactions, preventing potential substrates from accessing its active site. As a result, it is secreted from cells as a propeptide-containing, enzymatically inactive protein. Phosphorylation protects the propeptide against proteolysis.

It is found in the cytoplasm. The protein localises to the secreted. Its subcellular location is the endosome. The protein resides in the lysosome. It localises to the cell surface. It is found in the endoplasmic reticulum. The protein localises to the golgi apparatus. Its activity is regulated as follows. Its proteolytic activity is autoinhibited by the non-covalent binding of the propeptide to the catalytic domain. Inhibited by EGTA. Crucial player in the regulation of plasma cholesterol homeostasis. Binds to low-density lipid receptor family members: low density lipoprotein receptor (LDLR), very low density lipoprotein receptor (VLDLR), apolipoprotein E receptor (LRP1/APOER) and apolipoprotein receptor 2 (LRP8/APOER2), and promotes their degradation in intracellular acidic compartments. Acts via a non-proteolytic mechanism to enhance the degradation of the hepatic LDLR through a clathrin LDLRAP1/ARH-mediated pathway. May prevent the recycling of LDLR from endosomes to the cell surface or direct it to lysosomes for degradation. Can induce ubiquitination of LDLR leading to its subsequent degradation. Inhibits intracellular degradation of APOB via the autophagosome/lysosome pathway in a LDLR-independent manner. Involved in the disposal of non-acetylated intermediates of BACE1 in the early secretory pathway. Inhibits epithelial Na(+) channel (ENaC)-mediated Na(+) absorption by reducing ENaC surface expression primarily by increasing its proteasomal degradation. Regulates neuronal apoptosis via modulation of LRP8/APOER2 levels and related anti-apoptotic signaling pathways. In Pongo pygmaeus (Bornean orangutan), this protein is Proprotein convertase subtilisin/kexin type 9 (PCSK9).